A 566-amino-acid chain; its full sequence is Protein RocB (566 aa).

Functionally, involved in arginine degradative pathway. The protein is Protein RocB (rocB) of Bacillus subtilis (strain 168).